A 765-amino-acid chain; its full sequence is 5-methyltetrahydropteroyltriglutamate--homocysteine methyltransferase (765 aa).

Residues 18 to 21 and K114 contribute to the 5-methyltetrahydropteroyltri-L-glutamate site; that span reads REWK. Residues 437-439 and E490 each bind L-homocysteine; that span reads IGS. L-methionine-binding positions include 437-439 and E490; that span reads IGS. A 5-methyltetrahydropteroyltri-L-glutamate-binding site is contributed by W567. Residue D605 participates in L-homocysteine binding. D605 contributes to the L-methionine binding site. Residue E611 coordinates 5-methyltetrahydropteroyltri-L-glutamate. Zn(2+) contacts are provided by H647, C649, and E671. The Proton donor role is filled by H700. C732 lines the Zn(2+) pocket.

Belongs to the vitamin-B12 independent methionine synthase family. It depends on Zn(2+) as a cofactor.

The enzyme catalyses 5-methyltetrahydropteroyltri-L-glutamate + L-homocysteine = tetrahydropteroyltri-L-glutamate + L-methionine. Its pathway is amino-acid biosynthesis; L-methionine biosynthesis via de novo pathway; L-methionine from L-homocysteine (MetE route): step 1/1. Its function is as follows. Catalyzes the transfer of a methyl group from 5-methyltetrahydrofolate to homocysteine resulting in methionine formation. In Listeria innocua serovar 6a (strain ATCC BAA-680 / CLIP 11262), this protein is 5-methyltetrahydropteroyltriglutamate--homocysteine methyltransferase.